We begin with the raw amino-acid sequence, 127 residues long: Large ribosomal subunit protein bL17 (127 aa).

Belongs to the bacterial ribosomal protein bL17 family. As to quaternary structure, part of the 50S ribosomal subunit. Contacts protein L32.

This chain is Large ribosomal subunit protein bL17, found in Levilactobacillus brevis (strain ATCC 367 / BCRC 12310 / CIP 105137 / JCM 1170 / LMG 11437 / NCIMB 947 / NCTC 947) (Lactobacillus brevis).